A 262-amino-acid chain; its full sequence is ATP synthase subunit a (262 aa).

The next 7 membrane-spanning stretches (helical) occupy residues 30–50 (ITSLTNIAILFIIGLLVLTIF), 64–84 (WNIVLETWVASILGIVKDQIG), 91–111 (LIYFPLIFTFFSFVFISNILG), 123–143 (ISVTLGLSIAIMIGVTLIGFS), 149–169 (FFSLFVPKGTPLALVPLLVLI), 195–215 (LFGVISMLSVSACMAVSSILL), and 220–240 (IGLPLAVLVVLYGLELLVALL).

Belongs to the ATPase A chain family. As to quaternary structure, F-type ATPases have 2 components, CF(1) - the catalytic core - and CF(0) - the membrane proton channel. CF(1) has five subunits: alpha(3), beta(3), gamma(1), delta(1), epsilon(1). CF(0) has three main subunits: a, b and c.

It localises to the mitochondrion inner membrane. Its function is as follows. Mitochondrial membrane ATP synthase (F(1)F(0) ATP synthase or Complex V) produces ATP from ADP in the presence of a proton gradient across the membrane which is generated by electron transport complexes of the respiratory chain. F-type ATPases consist of two structural domains, F(1) - containing the extramembraneous catalytic core and F(0) - containing the membrane proton channel, linked together by a central stalk and a peripheral stalk. During catalysis, ATP synthesis in the catalytic domain of F(1) is coupled via a rotary mechanism of the central stalk subunits to proton translocation. Key component of the proton channel; it may play a direct role in the translocation of protons across the membrane. The polypeptide is ATP synthase subunit a (ATP6) (Allomyces arbusculus (Aquatic fungus)).